A 97-amino-acid chain; its full sequence is Large ribosomal subunit protein bL28 (97 aa).

The protein belongs to the bacterial ribosomal protein bL28 family.

In Rickettsia peacockii (strain Rustic), this protein is Large ribosomal subunit protein bL28.